We begin with the raw amino-acid sequence, 194 residues long: Early growth response protein 1 (194 aa).

3 C2H2-type zinc fingers span residues 1–18 (CDRR…IRIH), 24–46 (FQCR…IRTH), and 52–74 (FACD…TKIH).

Belongs to the EGR C2H2-type zinc-finger protein family.

The protein localises to the nucleus. The protein resides in the cytoplasm. Transcriptional regulator. Recognizes and binds to the DNA sequence 5'-GCG(T/G)GGGCG-3'(EGR-site) in the promoter region of target genes. Binds double-stranded target DNA, irrespective of the cytosine methylation status. Regulates the transcription of numerous target genes, and thereby plays an important role in regulating the response to growth factors, DNA damage, and ischemia. Plays a role in the regulation of cell survival, proliferation and cell death. Mediates responses to ischemia and hypoxia; regulates the expression of proteins that are involved in inflammatory processes. Plays a role in regulating the expression of circadian clock genes. This Gallus gallus (Chicken) protein is Early growth response protein 1 (EGR1).